Reading from the N-terminus, the 292-residue chain is Complex I assembly factor TIMMDC1, mitochondrial (292 aa).

Transmembrane regions (helical) follow at residues 146–168 (WSWR…TVYR) and 195–215 (GLLS…VLIL).

This sequence belongs to the Tim17/Tim22/Tim23 family. Associates with the intermediate 315 kDa subcomplex of incompletely assembled complex I.

It localises to the mitochondrion membrane. Its function is as follows. Chaperone protein involved in the assembly of the mitochondrial NADH:ubiquinone oxidoreductase complex (complex I). Participates in constructing the membrane arm of complex I. The protein is Complex I assembly factor TIMMDC1, mitochondrial (timmdc1) of Danio rerio (Zebrafish).